Here is a 200-residue protein sequence, read N- to C-terminus: Segregation and condensation protein B (200 aa).

This sequence belongs to the ScpB family. As to quaternary structure, homodimer. Homodimerization may be required to stabilize the binding of ScpA to the Smc head domains. Component of a cohesin-like complex composed of ScpA, ScpB and the Smc homodimer, in which ScpA and ScpB bind to the head domain of Smc. The presence of the three proteins is required for the association of the complex with DNA.

It localises to the cytoplasm. In terms of biological role, participates in chromosomal partition during cell division. May act via the formation of a condensin-like complex containing Smc and ScpA that pull DNA away from mid-cell into both cell halves. This Lactobacillus delbrueckii subsp. bulgaricus (strain ATCC 11842 / DSM 20081 / BCRC 10696 / JCM 1002 / NBRC 13953 / NCIMB 11778 / NCTC 12712 / WDCM 00102 / Lb 14) protein is Segregation and condensation protein B.